The chain runs to 226 residues: Endonuclease V (226 aa).

Residues D43 and D109 each contribute to the Mg(2+) site.

It belongs to the endonuclease V family. Requires Mg(2+) as cofactor.

The protein resides in the cytoplasm. It carries out the reaction Endonucleolytic cleavage at apurinic or apyrimidinic sites to products with a 5'-phosphate.. DNA repair enzyme involved in the repair of deaminated bases. Selectively cleaves double-stranded DNA at the second phosphodiester bond 3' to a deoxyinosine leaving behind the intact lesion on the nicked DNA. The polypeptide is Endonuclease V (Kosmotoga olearia (strain ATCC BAA-1733 / DSM 21960 / TBF 19.5.1)).